The chain runs to 305 residues: Acyl transferase (305 aa).

Catalysis depends on charge relay system residues Ser-114, Asp-211, and His-241.

This sequence belongs to the LuxD family.

The protein operates within lipid metabolism; fatty acid reduction for biolumincescence. In terms of biological role, acyl transferase is part of the fatty acid reductase system required for aldehyde biosynthesis; it produces fatty acids for the luminescent reaction. In Vibrio harveyi (Beneckea harveyi), this protein is Acyl transferase (luxD).